A 156-amino-acid chain; its full sequence is Protein-export protein SecB (156 aa).

The protein belongs to the SecB family. In terms of assembly, homotetramer, a dimer of dimers. One homotetramer interacts with 1 SecA dimer.

It localises to the cytoplasm. Functionally, one of the proteins required for the normal export of preproteins out of the cell cytoplasm. It is a molecular chaperone that binds to a subset of precursor proteins, maintaining them in a translocation-competent state. It also specifically binds to its receptor SecA. The sequence is that of Protein-export protein SecB from Paraburkholderia xenovorans (strain LB400).